We begin with the raw amino-acid sequence, 73 residues long: Small ribosomal subunit protein bS18c (73 aa).

The protein belongs to the bacterial ribosomal protein bS18 family. Part of the 30S ribosomal subunit.

Its subcellular location is the plastid. It localises to the chloroplast. This chain is Small ribosomal subunit protein bS18c, found in Rhodomonas salina (Cryptomonas salina).